The sequence spans 308 residues: tRNA dimethylallyltransferase (308 aa).

Gly-14–Ser-21 serves as a coordination point for ATP. Thr-16–Ser-21 provides a ligand contact to substrate. The tract at residues Asp-39–Gln-42 is interaction with substrate tRNA.

It belongs to the IPP transferase family. As to quaternary structure, monomer. Mg(2+) is required as a cofactor.

It catalyses the reaction adenosine(37) in tRNA + dimethylallyl diphosphate = N(6)-dimethylallyladenosine(37) in tRNA + diphosphate. In terms of biological role, catalyzes the transfer of a dimethylallyl group onto the adenine at position 37 in tRNAs that read codons beginning with uridine, leading to the formation of N6-(dimethylallyl)adenosine (i(6)A). The polypeptide is tRNA dimethylallyltransferase (Bradyrhizobium sp. (strain ORS 278)).